Here is a 300-residue protein sequence, read N- to C-terminus: uncharacterized protein (300 aa).

The protein belongs to the histone deacetylase family.

Putative deacetylase. This is an uncharacterized protein from Picosynechococcus sp. (strain ATCC 27264 / PCC 7002 / PR-6) (Agmenellum quadruplicatum).